Here is a 935-residue protein sequence, read N- to C-terminus: Lon protease homolog 2, peroxisomal (935 aa).

Positions 12–296 constitute a Lon N-terminal domain; sequence LPVHRLERNL…NLRRLVEEMG (285 aa). 452 to 459 lines the ATP pocket; the sequence is GPPGVGKT. The 231-residue stretch at 692–922 folds into the Lon proteolytic domain; the sequence is QKGYGVVNGL…SDVLASVWEG (231 aa). Residues serine 789 and lysine 832 contribute to the active site. Residues 933-935 carry the Microbody targeting signal motif; sequence ARI.

The protein belongs to the peptidase S16 family.

The protein resides in the peroxisome matrix. The enzyme catalyses Hydrolysis of proteins in presence of ATP.. Its function is as follows. ATP-dependent serine protease that mediates the selective degradation of misfolded and unassembled polypeptides in the peroxisomal matrix. Necessary for type 2 peroxisome targeting signal (PTS2)-containing protein processing and facilitates peroxisome matrix protein import. This chain is Lon protease homolog 2, peroxisomal (PLN), found in Pichia angusta (Yeast).